Consider the following 1820-residue polypeptide: MEPPQETNRPFSTLDNRSGQVQVLSATPLLQRNPYSSPDIMHIKGSEASSVPYALNQGTTALPKNKNQEGTGHRLLNMLRKTLKESDSEELEITQETPNLVPFGDVVGCLGIHIKNCRHFMPKISLQHYANLFIRISINKAVKCTKMCSLLSKNDEKNTVIKFDEVKYFSVQVPRRYDDKRNNILLELIQYDNREKRAFLLGSVQIHLYEVIQKGCFIEEVQVLHGNIFVCRLEVEFMFSYGNFGYGFSHQLKPLQKITEPSMFMNLAPPPERTDPVTKVITPQTVEYPAFLSPDLNVTVGTPAVQSSNQPSVVRLEKLQQQPRERLEKMKKEYRNLNTWIDKANYLESILMPKLEHKDSEETNIDEASENTKSNHPEEELENIVGVDIPLVNEEAETTANELLDNDSEKGLTIPTLNQSDQDNSTADASKNDESTPSPTEVHSLCTISNQETIKAGRIPPLGERQSESMPDRKMKNVFFPLEVKLKDNYPSILKADSSLSEVAFSPKEYNSPSFRPEYIEFKPKFQFQKFNKNGFDPFLRNINKMSVRKRKDQDIYKYRNILGAEVIEHEDQDPPYPAQSKTAGPANTTWAHDPNIFTTKMLETENKLAPDPTINTIKGLDTKNSLKENLPNVSLPSIKGESSRAGNVQANTCHLSKSLNFTPHIEYLKQSMILKSILSENLQDLSDKLFSKPEVSMNSEAREKSSSPLLSIHDKSSSSMEDNVLEKKQDLNNWLSEKDILNSKTTLSQIIKNIPADSFSEGSQIIENIPADSLLEGGQVIKNIPEYSLSEGGQIIKNIPADSFLESGPGQSPEVEEHVSKKHFEADERDFPIKKNSSTKKKHLISEVPNSKSGSSGTVHDYIMRQIFTAPIFSELEIEVKEPSETPMNLENQLPTPWKRSLSSHILFHEENADEIELPQPRSATSQIIQAFPIDTLLESGIIKVIELDKEHHKSSLLGTGITSPKGNLKDSQEYYSEIRSETEPLSEQSIPIIPKDTTSVSRAEFIQEDQNMFPQDSSYYSIANKELYLPRNGQRLCKDKNDLSSTLESLTNSLMDKLSESDEIMLKSFLKNIFNVFFKYNHSERRGQPEKELERLIQPSFTSDTEHLEELQEDFDKADKLDRKPILSPKLRVFLEELSESEVKHLKSELSKQIQHYLVERLSESGHITKEDLPKIYQNLYLMNEKAEQKGPNSFQGKYSETVKEIMSFVNNFNHHFIDKHLEIKLRSFLKEILQNYFLKNISESSLFNETASETIYPNISSLRTKSVSISFHELEQDISKGSFGRRFEINMKYPLSKSLQNYLIALSENELLHLKADLSKHLQSLFIEKLSKSGLMTKKQLEGINQHINLLNSSSIPLKYIKTHLPFRDDCHFVEKHSEKQNKYSRIVQQTTLQTVSEDKLREAELIREKEKKYFPLQNLKGNSSLIKEQKSYYTKEEAKTPSLIKVQPSSNENIQASPLSKSSEILTDILLKKLRKEHVFTQLPQAENSVHKTEIQDPYSWGGKSKITQSKAWCEKTLKMKSLDRKEHVNIYKWTVQEKPEAVLTSYPRIPNARMPREDEYLNRITFPSWQSSTLTHFNTETGEKSKLEDQYCQTLKGNNNNNKKHLVTFAQYKKEIQTLYIKPDEICSEKCAKFPEIQSFQYKVVEDEKNLKPHLFPELFKIEDLKPKVRKERDRVAQPKKSFNKIVRILPTTLPTTRIHLKKSVPRTLLHWTARRTIHDCSDKFEDLHDMTSFTHLKKVKSRSRLLGKSSDDIHNHARHSARPYTAPEVNKQRESYSGKFTSRRMVSSGLVHINDKTSDYEMHKMRPKKIKRGY.

In terms of domain architecture, C2 spans 87 to 222; it reads DSEELEITQE…QKGCFIEEVQ (136 aa). 4 disordered regions span residues 360-383, 403-443, 695-722, and 838-857; these read SEET…ELEN, LLDN…TEVH, EVSM…SSME, and SSTK…SGSS. The segment covering 415-443 has biased composition (polar residues); the sequence is PTLNQSDQDNSTADASKNDESTPSPTEVH.

In terms of assembly, component of the CatSper complex or CatSpermasome composed of the core pore-forming members CATSPER1, CATSPER2, CATSPER3 and CATSPER4 as well as auxiliary members CATSPERB, CATSPERG, CATSPERD, CATSPERE, CATSPERZ, C2CD6/CATSPERT, TMEM249, TMEM262 and EFCAB9. HSPA1 may be an additional auxiliary complex member. The core complex members CATSPER1, CATSPER2, CATSPER3 and CATSPER4 form a heterotetrameric channel. The auxiliary CATSPERB, CATSPERG, CATSPERD and CATSPERE subunits form a pavilion-like structure over the pore which stabilizes the complex through interactions with CATSPER4, CATSPER3, CATSPER1 and CATSPER2 respectively. SLCO6C1 interacts with CATSPERE and TMEM262/CATSPERH interacts with CATSPERB, further stabilizing the complex. C2CD6/CATSPERT interacts at least with CATSPERD and is required for targeting the CatSper complex in the flagellar membrane. In terms of tissue distribution, expressed in testis (at protein level).

It is found in the cell projection. The protein localises to the cilium. The protein resides in the flagellum membrane. In terms of biological role, auxiliary component of the CatSper complex, a complex involved in sperm cell hyperactivation. Sperm cell hyperactivation is needed for sperm motility which is essential late in the preparation of sperm for fertilization. Required for CatSper complex targeting and trafficking into the quadrilinear nanodomains. Targets the preassembled CatSper complexes to elongating flagella, where it links the channel-carrying vesicles and motor proteins. This Homo sapiens (Human) protein is Cation channel sperm-associated targeting subunit tau.